The following is a 578-amino-acid chain: ATP-dependent RNA helicase dbp3 (578 aa).

Residues 59–69 (KRSADEEASVK) are compositionally biased toward basic and acidic residues. Residues 59–117 (KRSADEEASVKRKEKKSKHEHKKHKKDKPSADKDRISKKDKKKSKKGKSKTKEESIEIN) form a disordered region. The span at 70–85 (RKEKKSKHEHKKHKKD) shows a compositional bias: basic residues. The span at 86–95 (KPSADKDRIS) shows a compositional bias: basic and acidic residues. Residues 96 to 107 (KKDKKKSKKGKS) are compositionally biased toward basic residues. The Q motif motif lies at 167-193 (LQFDELDVSAKLREGLKNYKEPTPIQA). A Helicase ATP-binding domain is found at 196–373 (WPYLLAGRDV…ATFLKDPVKI (178 aa)). 209-216 (AETGSGKT) contacts ATP. The DEAD box signature appears at 316–319 (DEAD). The Helicase C-terminal domain occupies 402-550 (MLDNLLRKHL…DIPEGLFKFG (149 aa)).

It belongs to the DEAD box helicase family. DDX5/DBP2 subfamily.

The protein resides in the nucleus. Its subcellular location is the nucleolus. It catalyses the reaction ATP + H2O = ADP + phosphate + H(+). Its function is as follows. ATP-dependent RNA helicase required for 60S ribosomal subunit synthesis. Involved in efficient pre-rRNA processing, predominantly at site A3, which is necessary for the normal formation of 25S and 5.8S rRNAs. This is ATP-dependent RNA helicase dbp3 (dbp3) from Schizosaccharomyces pombe (strain 972 / ATCC 24843) (Fission yeast).